Consider the following 371-residue polypeptide: Forkhead box protein E1 (371 aa).

Residues 21-53 (EERGEAAAAGAGVPAEAAGRGAGGRRRKRPLQR) are disordered. Over residues 26 to 39 (AAAAGAGVPAEAAG) the composition is skewed to low complexity. Basic residues predominate over residues 43–52 (GGRRRKRPLQ). The fork-head DNA-binding region spans 55–149 (KPPYSYIALI…ESGSFLRRRK (95 aa)).

Phosphorylated. As to expression, expressed in Rathke pouch, in thyroid, and in the epithelium of the pharyngeal wall and arches, whereas it is absent in the epithelium of the pharyngeal pouches.

It is found in the nucleus. Transcription factor that binds consensus sites on a variety of gene promoters and activate their transcription. Involved in proper palate formation, most probably through the expression of MSX1 and TGFB3 genes which are direct targets of this transcription factor. Also implicated in thyroid gland morphogenesis. May indirectly play a role in cell growth and migration through the regulation of WNT5A expression. In Mus musculus (Mouse), this protein is Forkhead box protein E1 (Foxe1).